A 123-amino-acid chain; its full sequence is S-adenosylmethionine decarboxylase proenzyme 2 (123 aa).

The active-site Schiff-base intermediate with substrate; via pyruvic acid is S65. S65 is modified (pyruvic acid (Ser); by autocatalysis). H70 serves as the catalytic Proton acceptor; for processing activity. Residue C85 is the Proton donor; for catalytic activity of the active site.

The protein belongs to the prokaryotic AdoMetDC family. Type 1 subfamily. Heterotetramer of two alpha and two beta chains arranged as a dimer of alpha/beta heterodimers. The cofactor is pyruvate. Post-translationally, is synthesized initially as an inactive proenzyme. Formation of the active enzyme involves a self-maturation process in which the active site pyruvoyl group is generated from an internal serine residue via an autocatalytic post-translational modification. Two non-identical subunits are generated from the proenzyme in this reaction, and the pyruvate is formed at the N-terminus of the alpha chain, which is derived from the carboxyl end of the proenzyme. The post-translation cleavage follows an unusual pathway, termed non-hydrolytic serinolysis, in which the side chain hydroxyl group of the serine supplies its oxygen atom to form the C-terminus of the beta chain, while the remainder of the serine residue undergoes an oxidative deamination to produce ammonia and the pyruvoyl group blocking the N-terminus of the alpha chain.

It carries out the reaction S-adenosyl-L-methionine + H(+) = S-adenosyl 3-(methylsulfanyl)propylamine + CO2. Its pathway is amine and polyamine biosynthesis; S-adenosylmethioninamine biosynthesis; S-adenosylmethioninamine from S-adenosyl-L-methionine: step 1/1. Catalyzes the decarboxylation of S-adenosylmethionine to S-adenosylmethioninamine (dcAdoMet), the propylamine donor required for the synthesis of the polyamines spermine and spermidine from the diamine putrescine. In Bacillus cereus (strain ATCC 14579 / DSM 31 / CCUG 7414 / JCM 2152 / NBRC 15305 / NCIMB 9373 / NCTC 2599 / NRRL B-3711), this protein is S-adenosylmethionine decarboxylase proenzyme 2.